The sequence spans 244 residues: Anti-H(O) lectin 1 (244 aa).

2 N-linked (GlcNAc...) asparagine glycosylation sites follow: Asn113 and Asn117. Mn(2+) contacts are provided by Glu127 and Asp129. The Ca(2+) site is built by Asp129, Tyr131, Asn137, and Asp142. 2 residues coordinate Mn(2+): Asp142 and His145.

This sequence belongs to the leguminous lectin family. As to quaternary structure, homotetramer.

Functionally, di-N-acetylchitobiose-binding anti-H(O) lectin. The chain is Anti-H(O) lectin 1 from Cytisophyllum sessilifolium (Sessile-leaved cytisus).